A 934-amino-acid chain; its full sequence is Protein translocase subunit SecA (934 aa).

Residues Gln87, 105–109, and Asp515 each bind ATP; that span reads GEGKT. Zn(2+) contacts are provided by Cys918, Cys920, Cys929, and His930.

Belongs to the SecA family. Monomer and homodimer. Part of the essential Sec protein translocation apparatus which comprises SecA, SecYEG and auxiliary proteins SecDF-YajC and YidC. Zn(2+) is required as a cofactor.

The protein resides in the cell inner membrane. Its subcellular location is the cytoplasm. It catalyses the reaction ATP + H2O + cellular proteinSide 1 = ADP + phosphate + cellular proteinSide 2.. In terms of biological role, part of the Sec protein translocase complex. Interacts with the SecYEG preprotein conducting channel. Has a central role in coupling the hydrolysis of ATP to the transfer of proteins into and across the cell membrane, serving both as a receptor for the preprotein-SecB complex and as an ATP-driven molecular motor driving the stepwise translocation of polypeptide chains across the membrane. The polypeptide is Protein translocase subunit SecA (Ralstonia nicotianae (strain ATCC BAA-1114 / GMI1000) (Ralstonia solanacearum)).